We begin with the raw amino-acid sequence, 334 residues long: G-protein coupled receptor 12 (334 aa).

At 1–48 (MNEDPKVNLSGLPRDCIDAGAPENISAAVPSQGSVAESEPELVVNPWD) the chain is on the extracellular side. 2 N-linked (GlcNAc...) asparagine glycosylation sites follow: Asn-8 and Asn-24. A helical transmembrane segment spans residues 49 to 69 (IVLCSSGTLICCENAVVVLII). At 70–78 (FHSPSLRAP) the chain is on the cytoplasmic side. The chain crosses the membrane as a helical span at residues 79–99 (MFLLIGSLALADLLAGLGLII). The Extracellular segment spans residues 100–113 (NFVFAYLLQSEATK). Residues 114-134 (LVTIGLIVASFSASVCSLLAI) traverse the membrane as a helical segment. Residues 135 to 158 (TVDRYLSLYYALTYHSERTVTFTY) are Cytoplasmic-facing. A helical membrane pass occupies residues 159–179 (VMLVMLWGTSICLGLLPVMGW). Over 180–199 (NCLRDESTCSVVRPLTKNNA) the chain is Extracellular. Residues 200–220 (AILSISFLFMFALMLQLYIQI) form a helical membrane-spanning segment. Topologically, residues 221 to 252 (CKIVMRHAHQIALQHHFLATSHYVTTRKGVST) are cytoplasmic. The chain crosses the membrane as a helical span at residues 253–273 (LALILGTFAACWMPFTLYSLI). Topologically, residues 274–282 (ADYTYPSIY) are extracellular. A helical membrane pass occupies residues 283–303 (TYATLLPATYNSIINPVIYAF). The Cytoplasmic portion of the chain corresponds to 304–334 (RNQEIQKALCLICCGCIPSSLSQRARSPSDV). Cys-317 carries the S-palmitoyl cysteine lipid modification. A phosphoserine mark is found at Ser-330 and Ser-332.

The protein belongs to the G-protein coupled receptor 1 family. As to expression, expressed predominantly in the forebrain and a lesser extent in the hindbrain. Lower expression in the liver.

Its subcellular location is the cell membrane. Receptor with constitutive G(s) signaling activity that stimulates cyclic AMP production. Promotes neurite outgrowth and blocks myelin inhibition in neurons. This chain is G-protein coupled receptor 12 (Gpr12), found in Mus musculus (Mouse).